A 597-amino-acid chain; its full sequence is Elongation factor 4 (597 aa).

One can recognise a tr-type G domain in the interval 2–184 (KNIRNFSIIA…EIVAKIPAPT (183 aa)). GTP-binding positions include 14 to 19 (DHGKST) and 131 to 134 (NKID).

Belongs to the TRAFAC class translation factor GTPase superfamily. Classic translation factor GTPase family. LepA subfamily.

It is found in the cell inner membrane. The catalysed reaction is GTP + H2O = GDP + phosphate + H(+). Its function is as follows. Required for accurate and efficient protein synthesis under certain stress conditions. May act as a fidelity factor of the translation reaction, by catalyzing a one-codon backward translocation of tRNAs on improperly translocated ribosomes. Back-translocation proceeds from a post-translocation (POST) complex to a pre-translocation (PRE) complex, thus giving elongation factor G a second chance to translocate the tRNAs correctly. Binds to ribosomes in a GTP-dependent manner. The sequence is that of Elongation factor 4 from Neisseria meningitidis serogroup B (strain ATCC BAA-335 / MC58).